The chain runs to 226 residues: Ribose-5-phosphate isomerase A (226 aa).

Substrate contacts are provided by residues 26 to 29, 82 to 85, and 95 to 98; these read TGST, DGAD, and KGGG. E104 functions as the Proton acceptor in the catalytic mechanism. A substrate-binding site is contributed by K122.

This sequence belongs to the ribose 5-phosphate isomerase family. As to quaternary structure, homodimer.

The catalysed reaction is aldehydo-D-ribose 5-phosphate = D-ribulose 5-phosphate. The protein operates within carbohydrate degradation; pentose phosphate pathway; D-ribose 5-phosphate from D-ribulose 5-phosphate (non-oxidative stage): step 1/1. In terms of biological role, catalyzes the reversible conversion of ribose-5-phosphate to ribulose 5-phosphate. This chain is Ribose-5-phosphate isomerase A, found in Streptococcus thermophilus (strain CNRZ 1066).